The primary structure comprises 107 residues: MVNFNQFLKQAQSMQKKMQEAQEQMANTRYTGKAGGMLVEIIITGKGEIEKVSIDESLLKIEEKEILEDLIKVAFNDAKQKCDEDSQNSLSGALNGMSLPPGFKIPF.

Belongs to the YbaB/EbfC family. As to quaternary structure, homodimer.

It localises to the cytoplasm. The protein localises to the nucleoid. Its function is as follows. Binds to DNA and alters its conformation. May be involved in regulation of gene expression, nucleoid organization and DNA protection. The polypeptide is Nucleoid-associated protein RT0857 (Rickettsia typhi (strain ATCC VR-144 / Wilmington)).